The chain runs to 79 residues: D-alanyl carrier protein (79 aa).

In terms of domain architecture, Carrier spans 1–77; the sequence is MDVKETILNI…KIISGVVELM (77 aa). Ser35 is modified (O-(pantetheine 4'-phosphoryl)serine).

This sequence belongs to the DltC family. 4'-phosphopantetheine is transferred from CoA to a specific serine of apo-DCP.

It localises to the cytoplasm. The protein operates within cell wall biogenesis; lipoteichoic acid biosynthesis. Functionally, carrier protein involved in the D-alanylation of lipoteichoic acid (LTA). The loading of thioester-linked D-alanine onto DltC is catalyzed by D-alanine--D-alanyl carrier protein ligase DltA. The DltC-carried D-alanyl group is further transferred to cell membrane phosphatidylglycerol (PG) by forming an ester bond, probably catalyzed by DltD. D-alanylation of LTA plays an important role in modulating the properties of the cell wall in Gram-positive bacteria, influencing the net charge of the cell wall. The sequence is that of D-alanyl carrier protein from Streptococcus suis (strain 05ZYH33).